Reading from the N-terminus, the 429-residue chain is 3-phosphoshikimate 1-carboxyvinyltransferase (429 aa).

3-phosphoshikimate contacts are provided by lysine 22, serine 23, and arginine 27. Residue lysine 22 participates in phosphoenolpyruvate binding. Residues glycine 94 and arginine 122 each coordinate phosphoenolpyruvate. 4 residues coordinate 3-phosphoshikimate: serine 167, glutamine 169, aspartate 315, and lysine 342. Glutamine 169 is a phosphoenolpyruvate binding site. The Proton acceptor role is filled by aspartate 315. The phosphoenolpyruvate site is built by arginine 346 and arginine 388.

It belongs to the EPSP synthase family. Monomer.

It localises to the cytoplasm. The enzyme catalyses 3-phosphoshikimate + phosphoenolpyruvate = 5-O-(1-carboxyvinyl)-3-phosphoshikimate + phosphate. It participates in metabolic intermediate biosynthesis; chorismate biosynthesis; chorismate from D-erythrose 4-phosphate and phosphoenolpyruvate: step 6/7. Its function is as follows. Catalyzes the transfer of the enolpyruvyl moiety of phosphoenolpyruvate (PEP) to the 5-hydroxyl of shikimate-3-phosphate (S3P) to produce enolpyruvyl shikimate-3-phosphate and inorganic phosphate. The sequence is that of 3-phosphoshikimate 1-carboxyvinyltransferase from Citrifermentans bemidjiense (strain ATCC BAA-1014 / DSM 16622 / JCM 12645 / Bem) (Geobacter bemidjiensis).